We begin with the raw amino-acid sequence, 148 residues long: MTQISGKARAAARLAAVQALYQADMEQTPLHLLLDEFHQHRLGAEIEDVEYAKADVAFFDDVVKGVDARRDEIDGLLSARLAKGWALPRLDRTMLQILRAGAYELMARRDVNVGTVITEYVDVAHAFFEEREAKFVNGLLDAVAKDVR.

Belongs to the NusB family.

Involved in transcription antitermination. Required for transcription of ribosomal RNA (rRNA) genes. Binds specifically to the boxA antiterminator sequence of the ribosomal RNA (rrn) operons. The polypeptide is Transcription antitermination protein NusB (Novosphingobium aromaticivorans (strain ATCC 700278 / DSM 12444 / CCUG 56034 / CIP 105152 / NBRC 16084 / F199)).